Reading from the N-terminus, the 491-residue chain is Cobyric acid synthase (491 aa).

In terms of domain architecture, GATase cobBQ-type spans 253–429 (AHRVAVVRLP…WHGSLEGDAL (177 aa)). The Nucleophile role is filled by Cys334. Residue His421 is part of the active site.

It belongs to the CobB/CobQ family. CobQ subfamily.

It participates in cofactor biosynthesis; adenosylcobalamin biosynthesis. Its function is as follows. Catalyzes amidations at positions B, D, E, and G on adenosylcobyrinic A,C-diamide. NH(2) groups are provided by glutamine, and one molecule of ATP is hydrogenolyzed for each amidation. In Mycobacterium ulcerans (strain Agy99), this protein is Cobyric acid synthase.